The sequence spans 340 residues: tRNA N6-adenosine threonylcarbamoyltransferase (340 aa).

Residues histidine 111 and histidine 115 each coordinate Fe cation. Substrate is bound by residues 134-138 (LVSGG), aspartate 167, glycine 180, and asparagine 276. Aspartate 304 is a Fe cation binding site.

This sequence belongs to the KAE1 / TsaD family. Fe(2+) is required as a cofactor.

It localises to the cytoplasm. It catalyses the reaction L-threonylcarbamoyladenylate + adenosine(37) in tRNA = N(6)-L-threonylcarbamoyladenosine(37) in tRNA + AMP + H(+). Its function is as follows. Required for the formation of a threonylcarbamoyl group on adenosine at position 37 (t(6)A37) in tRNAs that read codons beginning with adenine. Is involved in the transfer of the threonylcarbamoyl moiety of threonylcarbamoyl-AMP (TC-AMP) to the N6 group of A37, together with TsaE and TsaB. TsaD likely plays a direct catalytic role in this reaction. This Helicobacter pylori (strain ATCC 700392 / 26695) (Campylobacter pylori) protein is tRNA N6-adenosine threonylcarbamoyltransferase.